A 571-amino-acid polypeptide reads, in one-letter code: DM7 family protein CG15332 (571 aa).

The interval 440–472 (TRDDGINTADYQSQFPELEPEPEPEPEDEGEDV) is disordered. Residues 457-471 (LEPEPEPEPEDEGED) are compositionally biased toward acidic residues.

Belongs to the DM7 family.

This chain is DM7 family protein CG15332, found in Drosophila melanogaster (Fruit fly).